The chain runs to 386 residues: Putative F-box/kelch-repeat protein At3g17280 (386 aa).

Residues 1–48 (MTTISDLPYDLLPEILSRLPTKSIPKLKTTCKKWYALFKDPKFVEKKL) form the F-box domain. 2 Kelch repeats span residues 155 to 203 (SYKI…LKES) and 340 to 386 (RIYI…IVEV).

This is Putative F-box/kelch-repeat protein At3g17280 from Arabidopsis thaliana (Mouse-ear cress).